A 362-amino-acid polypeptide reads, in one-letter code: 3-dehydroquinate synthase (362 aa).

Residues Asp74–Lys79, Gly108–Asp112, Thr132–Thr133, Lys145, Lys154, and Thr172–Thr175 each bind NAD(+). Positions 187, 250, and 267 each coordinate Zn(2+).

This sequence belongs to the sugar phosphate cyclases superfamily. Dehydroquinate synthase family. It depends on Co(2+) as a cofactor. Zn(2+) serves as cofactor. The cofactor is NAD(+).

It is found in the cytoplasm. It catalyses the reaction 7-phospho-2-dehydro-3-deoxy-D-arabino-heptonate = 3-dehydroquinate + phosphate. The protein operates within metabolic intermediate biosynthesis; chorismate biosynthesis; chorismate from D-erythrose 4-phosphate and phosphoenolpyruvate: step 2/7. Catalyzes the conversion of 3-deoxy-D-arabino-heptulosonate 7-phosphate (DAHP) to dehydroquinate (DHQ). The sequence is that of 3-dehydroquinate synthase from Geobacter sp. (strain M21).